The chain runs to 324 residues: Probable cell division protein WhiA (324 aa).

The H-T-H motif DNA-binding region spans 275 to 308 (SLEELGALADPPLTKDAIAGRIRRLIAMADRRAD).

It belongs to the WhiA family.

Functionally, involved in cell division and chromosome segregation. The polypeptide is Probable cell division protein WhiA (Acidothermus cellulolyticus (strain ATCC 43068 / DSM 8971 / 11B)).